Consider the following 96-residue polypeptide: Large ribosomal subunit protein eL30 (96 aa).

This sequence belongs to the eukaryotic ribosomal protein eL30 family.

The protein is Large ribosomal subunit protein eL30 of Methanosphaerula palustris (strain ATCC BAA-1556 / DSM 19958 / E1-9c).